Reading from the N-terminus, the 144-residue chain is Small ribosomal subunit protein eS12y (144 aa).

S2 bears the N-acetylserine mark.

Belongs to the eukaryotic ribosomal protein eS12 family.

The polypeptide is Small ribosomal subunit protein eS12y (RPS12C) (Arabidopsis thaliana (Mouse-ear cress)).